The primary structure comprises 178 residues: Endothelin-2 (178 aa).

The signal sequence occupies residues 1-26 (MVAMPTAWCSIALALLLALHEGKGQV). Positions 27–46 (AAAPDQPAPSHRARASHLRP) are excised as a propeptide. Disulfide bonds link Cys-49-Cys-63 and Cys-51-Cys-59. A propeptide spanning residues 70-178 (VNTPGQTAPY…RPTHSRRWKR (109 aa)) is cleaved from the precursor. An endothelin-like region spans residues 96–111 (CECSSGRDPACATFCH).

It belongs to the endothelin/sarafotoxin family.

It is found in the secreted. In terms of biological role, endothelins are endothelium-derived vasoconstrictor peptides. This is Endothelin-2 (EDN2) from Felis catus (Cat).